The chain runs to 411 residues: Glutamate dehydrogenase 2 (411 aa).

The active site involves Lys102.

It belongs to the Glu/Leu/Phe/Val dehydrogenases family.

It localises to the mitochondrion. It catalyses the reaction L-glutamate + NAD(+) + H2O = 2-oxoglutarate + NH4(+) + NADH + H(+). The enzyme catalyses L-glutamate + NADP(+) + H2O = 2-oxoglutarate + NH4(+) + NADPH + H(+). This is Glutamate dehydrogenase 2 (GDH2) from Arabidopsis thaliana (Mouse-ear cress).